A 415-amino-acid chain; its full sequence is Enolase (415 aa).

Residue Gln-161 participates in (2R)-2-phosphoglycerate binding. The active-site Proton donor is the Glu-203. Mg(2+) is bound by residues Asp-240, Glu-281, and Asp-308. (2R)-2-phosphoglycerate is bound by residues Lys-333, Arg-362, Ser-363, and Lys-384. The active-site Proton acceptor is Lys-333.

It belongs to the enolase family. Requires Mg(2+) as cofactor.

Its subcellular location is the cytoplasm. The protein localises to the secreted. It localises to the cell surface. The enzyme catalyses (2R)-2-phosphoglycerate = phosphoenolpyruvate + H2O. It participates in carbohydrate degradation; glycolysis; pyruvate from D-glyceraldehyde 3-phosphate: step 4/5. Catalyzes the reversible conversion of 2-phosphoglycerate (2-PG) into phosphoenolpyruvate (PEP). It is essential for the degradation of carbohydrates via glycolysis. This Campylobacter hominis (strain ATCC BAA-381 / DSM 21671 / CCUG 45161 / LMG 19568 / NCTC 13146 / CH001A) protein is Enolase.